The sequence spans 256 residues: Cell division protein DivIB (256 aa).

The Cytoplasmic portion of the chain corresponds to 1 to 23 (MSKDLISTDEYIKIKKKRKRIKK). The chain crosses the membrane as a helical span at residues 24–44 (IVVLFIFLISILVTLCLKIPY). The 69-residue stretch at 45–113 (FNIESIEIKG…NKLEIYVKER (69 aa)) folds into the POTRA domain. Residues 45–256 (FNIESIEIKG…EGNPVFYIEK (212 aa)) lie on the Extracellular side of the membrane.

The protein belongs to the FtsQ/DivIB family. DivIB subfamily.

The protein localises to the cell membrane. Its function is as follows. Cell division protein that may be involved in stabilizing or promoting the assembly of the division complex. This is Cell division protein DivIB from Clostridium botulinum (strain Loch Maree / Type A3).